The chain runs to 26 residues: uncharacterized protein (26 aa).

The protein localises to the plastid. It localises to the chloroplast. This is an uncharacterized protein from Trieres chinensis (Marine centric diatom).